The sequence spans 243 residues: Biosynthetic peptidoglycan transglycosylase (243 aa).

A helical membrane pass occupies residues 21–43 (LLIVSLVSALMSVLQVIVFRFVD).

This sequence belongs to the glycosyltransferase 51 family.

Its subcellular location is the cell inner membrane. The enzyme catalyses [GlcNAc-(1-&gt;4)-Mur2Ac(oyl-L-Ala-gamma-D-Glu-L-Lys-D-Ala-D-Ala)](n)-di-trans,octa-cis-undecaprenyl diphosphate + beta-D-GlcNAc-(1-&gt;4)-Mur2Ac(oyl-L-Ala-gamma-D-Glu-L-Lys-D-Ala-D-Ala)-di-trans,octa-cis-undecaprenyl diphosphate = [GlcNAc-(1-&gt;4)-Mur2Ac(oyl-L-Ala-gamma-D-Glu-L-Lys-D-Ala-D-Ala)](n+1)-di-trans,octa-cis-undecaprenyl diphosphate + di-trans,octa-cis-undecaprenyl diphosphate + H(+). It participates in cell wall biogenesis; peptidoglycan biosynthesis. In terms of biological role, peptidoglycan polymerase that catalyzes glycan chain elongation from lipid-linked precursors. This chain is Biosynthetic peptidoglycan transglycosylase, found in Xylella fastidiosa (strain Temecula1 / ATCC 700964).